The sequence spans 395 residues: MNEQGLSEKEIFSYLENAKSEDTDYYRVLSSMCTHPHKIAVEANRLFIEANLGDLGLFAGASRLEQEVVGMLGELLHAPSIDVPFGGSCESSACGYLTTGGTESNIQAVRGMKNLVTTGKKELKGAPNIVIPESAHFSFDKVADMMGIEVRRASLDSEFRVDMASIESLIDANTIGLIGIAGNTEFGQIDPIDKLSEIALENELFLHIDAAFGGFVIPFLEKPQPFDFKLPGVTSIAVDPHKMGLSTIPSGALLFRSASFLDSLKVNTPYLTTKAQFTLTGTRSGASAAATCAVMKYLGNEGYRKNVQYCMQLTEKLVIEARKIGFEPLLEPVMNVVALKVPNPDFVREQMLERFGWNVSITRTPRALRLVLMPHNTLEDIEIFVQDLKEVTVEI.

K242 is modified (N6-(pyridoxal phosphate)lysine).

The protein belongs to the group II decarboxylase family. MfnA subfamily. Pyridoxal 5'-phosphate is required as a cofactor.

It carries out the reaction L-tyrosine + H(+) = tyramine + CO2. The catalysed reaction is L-aspartate + H(+) = beta-alanine + CO2. The protein operates within cofactor biosynthesis; methanofuran biosynthesis. It functions in the pathway cofactor biosynthesis; coenzyme A biosynthesis. Its function is as follows. Catalyzes the decarboxylation of L-tyrosine to produce tyramine for methanofuran biosynthesis. Can also catalyze the decarboxylation of L-aspartate to produce beta-alanine for coenzyme A (CoA) biosynthesis. The chain is Probable L-tyrosine/L-aspartate decarboxylase from Methanosarcina acetivorans (strain ATCC 35395 / DSM 2834 / JCM 12185 / C2A).